A 415-amino-acid polypeptide reads, in one-letter code: Gamma-glutamyl phosphate reductase (415 aa).

It belongs to the gamma-glutamyl phosphate reductase family.

It localises to the cytoplasm. It carries out the reaction L-glutamate 5-semialdehyde + phosphate + NADP(+) = L-glutamyl 5-phosphate + NADPH + H(+). The protein operates within amino-acid biosynthesis; L-proline biosynthesis; L-glutamate 5-semialdehyde from L-glutamate: step 2/2. In terms of biological role, catalyzes the NADPH-dependent reduction of L-glutamate 5-phosphate into L-glutamate 5-semialdehyde and phosphate. The product spontaneously undergoes cyclization to form 1-pyrroline-5-carboxylate. The protein is Gamma-glutamyl phosphate reductase of Mycobacterium sp. (strain JLS).